Reading from the N-terminus, the 267-residue chain is Ribosomal RNA small subunit methyltransferase NEP1 (267 aa).

The interval 1-46 is disordered; sequence MSELKNGTTEPKKNETTQSDSKSKSTSTNKSSVPPASLVPVQPTAL. Over residues 16–32 the composition is skewed to low complexity; sequence TTQSDSKSKSTSTNKSS. S-adenosyl-L-methionine contacts are provided by residues Leu-195, Gly-222, 227-229, and 242-247; these read GKD and LSDYPL.

This sequence belongs to the class IV-like SAM-binding methyltransferase superfamily. RNA methyltransferase NEP1 family. Homodimer.

Its subcellular location is the nucleus. It is found in the nucleolus. The enzyme catalyses a pseudouridine in rRNA + S-adenosyl-L-methionine = an N(1)-methylpseudouridine in rRNA + S-adenosyl-L-homocysteine + H(+). S-adenosyl-L-methionine-dependent pseudouridine N(1)-methyltransferase that methylates the pseudouridine corresponding to position 1189 (Psi1189) in S.cerevisiae 18S rRNA. Involved the biosynthesis of the hypermodified N1-methyl-N3-(3-amino-3-carboxypropyl) pseudouridine (m1acp3-Psi) conserved in eukaryotic 18S rRNA. Also has an essential role in 40S ribosomal subunit biogenesis independent on its methyltransferase activity, facilitating the incorporation of ribosomal protein S19 during the formation of pre-ribosomes. In Candida albicans (Yeast), this protein is Ribosomal RNA small subunit methyltransferase NEP1.